We begin with the raw amino-acid sequence, 360 residues long: MVPPTAVNDAPAAGSAVSVKDPAKDTILTPRFYTTDFEAMAAMDLRPNEAELEAICEEFRKDYNRHHFVRNDEFEGAADKLDPETRRVFVEFLEQSCTSEFSGFLLYKELSRRIKTRNPLLAECFAHMARDEARHAGFLNKSMSDFGLQLDLGFLTANKSYTFFQPKFIFYATYLSEKIGYWRYITIFRHLEKNPDSKIFPIFNFFENWCQDENRHGDFFDALMKAQPNTVRGFRARLWCRFFLLAVFATMYVRDVARKEFYEALGLDARDYDRLVIDKTNETTARVFPVVLDVKNPKFYAGLENLVTNNAALDAVDASASSAPIKVLRKLPHWIANGAQMASLFLMAPVRSESFQPSVR.

Belongs to the AcsF family. Fe cation is required as a cofactor.

The enzyme catalyses Mg-protoporphyrin IX 13-monomethyl ester + 3 NADPH + 3 O2 + 2 H(+) = 3,8-divinyl protochlorophyllide a + 3 NADP(+) + 5 H2O. The protein operates within porphyrin-containing compound metabolism; chlorophyll biosynthesis (light-independent). Its function is as follows. Catalyzes the formation of the isocyclic ring in chlorophyll biosynthesis. Mediates the cyclase reaction, which results in the formation of divinylprotochlorophyllide (Pchlide) characteristic of all chlorophylls from magnesium-protoporphyrin IX 13-monomethyl ester (MgPMME). This is Magnesium-protoporphyrin IX monomethyl ester [oxidative] cyclase from Synechococcus sp. (strain WH7803).